Here is an 81-residue protein sequence, read N- to C-terminus: MKVLILIIASVLLIGVECKDGFPVDSEGCILLPCATRAYCSVNCKFMKGSGGSCDTLACHCKGLPEDAKVQDKPTNKCGRK.

The first 18 residues, 1–18 (MKVLILIIASVLLIGVEC), serve as a signal peptide directing secretion. The LCN-type CS-alpha/beta domain maps to 19–78 (KDGFPVDSEGCILLPCATRAYCSVNCKFMKGSGGSCDTLACHCKGLPEDAKVQDKPTNKC). Cystine bridges form between cysteine 29/cysteine 78, cysteine 34/cysteine 54, cysteine 40/cysteine 59, and cysteine 44/cysteine 61. A Cysteine amide modification is found at cysteine 78.

This sequence belongs to the long (4 C-C) scorpion toxin superfamily. Sodium channel inhibitor family. Beta subfamily. As to expression, expressed by the venom gland.

The protein resides in the secreted. In terms of biological role, beta toxins bind voltage-independently at site-4 of sodium channels (Nav) and shift the voltage of activation toward more negative potentials thereby affecting sodium channel activation and promoting spontaneous and repetitive firing. This Centruroides tecomanus (Scorpion) protein is Beta-toxin Ct13.